The chain runs to 294 residues: Probable HTH-type transcriptional regulator LrrA (294 aa).

An HTH lysR-type domain is found at Met-1 to Thr-58. A DNA-binding region (H-T-H motif) is located at residues Phe-18–Ala-37.

It belongs to the LysR transcriptional regulatory family.

This chain is Probable HTH-type transcriptional regulator LrrA (lrrA), found in Synechococcus elongatus (strain ATCC 33912 / PCC 7942 / FACHB-805) (Anacystis nidulans R2).